A 349-amino-acid polypeptide reads, in one-letter code: tRNA pseudouridine synthase D (349 aa).

Position 27 (Phe-27) interacts with substrate. Asp-80 functions as the Nucleophile in the catalytic mechanism. Asn-129 contacts substrate. Residues 155 to 303 enclose the TRUD domain; that stretch reads GVPNYFGAQR…VEASRRAMLL (149 aa). Residue Phe-329 coordinates substrate.

This sequence belongs to the pseudouridine synthase TruD family.

The enzyme catalyses uridine(13) in tRNA = pseudouridine(13) in tRNA. Its function is as follows. Responsible for synthesis of pseudouridine from uracil-13 in transfer RNAs. This chain is tRNA pseudouridine synthase D, found in Salmonella typhi.